The primary structure comprises 460 residues: MSVRFSSASRRLGSCGGAGSVRLSGGGAGFGVGSTGSVPGFGSGFTCAFGGSSSAGSYSGGLGGGSASCTAFTGNEHGLLSGNEKVTMQNLNDRLASYLDNVRALEEANADLEQKIKGWYEKFGPGSCRGLDHDYSRYFTVIDDLRNQIISATTSNANIVLQNDNARLTADDFRLKFENEQALHQSVDADVSSLRRVLDELTLCRTDLEIQLETLSEELAYLKKNHEEEMKALQCAAGGNVNVEMNAAPGVDLTVLLNNMRAEYEALAEQNRRDAEAWFNEKSASLQQQISDDAGATTSARNELTEMKRNLQTLEIELQSLLATKHSLECSLTETEGNYCAQLAQIQAQIGALEEQLHQVRTETEGQKLEYEQLLDIKVHLEKEIETYCRLIDGEDGSCAKSKGYGGPGHQIKDPSKATVVKTIVEEIDPRGKVLSSRVHSVEEKSTKVNNVKSEQRVPS.

The segment at 1 to 83 (MSVRFSSASR…GNEHGLLSGN (83 aa)) is head. The segment at 84–119 (EKVTMQNLNDRLASYLDNVRALEEANADLEQKIKGW) is coil 1A. An IF rod domain is found at 84–399 (EKVTMQNLND…RLIDGEDGSC (316 aa)). Positions 120–141 (YEKFGPGSCRGLDHDYSRYFTV) are linker 1. Residues 142-233 (IDDLRNQIIS…KNHEEEMKAL (92 aa)) are coil 1B. The interval 234–256 (QCAAGGNVNVEMNAAPGVDLTVL) is linker 12. A coil 2 region spans residues 257–395 (LNNMRAEYEA…ETYCRLIDGE (139 aa)). The segment at 396–460 (DGSCAKSKGY…NVKSEQRVPS (65 aa)) is tail. Positions 435–460 (LSSRVHSVEEKSTKVNNVKSEQRVPS) are disordered. The span at 448-460 (KVNNVKSEQRVPS) shows a compositional bias: polar residues.

This sequence belongs to the intermediate filament family. Heterotetramer of two type I and two type II keratins. Interacts with KRT6A to form filaments.

The protein resides in the cytoplasm. Essential for the proper assembly of type I and type II keratin protein complexes and formation of keratin intermediate filaments in the inner root sheath (irs). This Bos taurus (Bovine) protein is Keratin, type I cytoskeletal 27.